The following is a 149-amino-acid chain: Nucleoside diphosphate kinase (149 aa).

Residues lysine 9, phenylalanine 57, arginine 85, threonine 91, arginine 102, and asparagine 112 each contribute to the ATP site. Histidine 115 (pros-phosphohistidine intermediate) is an active-site residue.

It belongs to the NDK family. As to quaternary structure, homotetramer. The cofactor is Mg(2+).

It localises to the cytoplasm. It catalyses the reaction a 2'-deoxyribonucleoside 5'-diphosphate + ATP = a 2'-deoxyribonucleoside 5'-triphosphate + ADP. It carries out the reaction a ribonucleoside 5'-diphosphate + ATP = a ribonucleoside 5'-triphosphate + ADP. Functionally, major role in the synthesis of nucleoside triphosphates other than ATP. The ATP gamma phosphate is transferred to the NDP beta phosphate via a ping-pong mechanism, using a phosphorylated active-site intermediate. The polypeptide is Nucleoside diphosphate kinase (Staphylococcus aureus (strain MSSA476)).